Consider the following 161-residue polypeptide: S-protein homolog 2 (161 aa).

The first 24 residues, 1–24 (MDIPKQYLSLFILIIFITTKLSQA), serve as a signal peptide directing secretion. 3 N-linked (GlcNAc...) asparagine glycosylation sites follow: Asn75, Asn106, and Asn157.

It belongs to the plant self-incompatibility (S1) protein family.

The protein resides in the secreted. This is S-protein homolog 2 from Arabidopsis thaliana (Mouse-ear cress).